Consider the following 291-residue polypeptide: 4-hydroxy-tetrahydrodipicolinate synthase (291 aa).

Thr-45 contacts pyruvate. Residue Tyr-131 is the Proton donor/acceptor of the active site. Catalysis depends on Lys-159, which acts as the Schiff-base intermediate with substrate. Pyruvate is bound at residue Ile-202.

It belongs to the DapA family. As to quaternary structure, homotetramer; dimer of dimers.

Its subcellular location is the cytoplasm. It carries out the reaction L-aspartate 4-semialdehyde + pyruvate = (2S,4S)-4-hydroxy-2,3,4,5-tetrahydrodipicolinate + H2O + H(+). It functions in the pathway amino-acid biosynthesis; L-lysine biosynthesis via DAP pathway; (S)-tetrahydrodipicolinate from L-aspartate: step 3/4. Catalyzes the condensation of (S)-aspartate-beta-semialdehyde [(S)-ASA] and pyruvate to 4-hydroxy-tetrahydrodipicolinate (HTPA). The polypeptide is 4-hydroxy-tetrahydrodipicolinate synthase (Methanosarcina barkeri (strain Fusaro / DSM 804)).